Consider the following 70-residue polypeptide: Melittin-N (70 aa).

A signal peptide spans 1-21; the sequence is MKFLVNVALVFMVVYISYIYA. Residues 22–43 constitute a propeptide, removed by a dipeptidylpeptidase; sequence APEPEPAPEPEAEADAEADPEA. An N-formylglycine; partial modification is found at G44. At Q69 the chain carries Glutamine amide.

The protein belongs to the melittin family. Monomer (in solution and for integration into membranes), homotetramer (in solution and potentially as a toroidal pore in membranes), and potenially homomultimer (as a toroidal pore in membranes). Expressed by the venom gland.

It localises to the secreted. It is found in the target cell membrane. Main toxin of bee venom with strong hemolytic activity and antimicrobial activity. It has enhancing effects on bee venom phospholipase A2 activity. This amphipathic toxin binds to negatively charged membrane surface and forms pore by inserting into lipid bilayers inducing the leakage of ions and molecules and the enhancement of permeability that ultimately leads to cell lysis. It acts as a voltage-gated pore with higher selectivity for anions over cations. The ion conductance has been shown to be voltage-dependent. Self-association of melittin in membranes is promoted by high ionic strength, but not by the presence of negatively charged lipids. In vivo, intradermal injection into healthy human volunteers produce sharp pain sensation and an inflammatory response. It produces pain by activating primary nociceptor cells directly and indirectly due to its ability to activate plasma membrane phospholipase A2 and its pore-forming activity. Shows lower cytotoxicity when tested on E.coli and cancer cell lines than melittin, as well as lower anti-inflammatory properties and lower properties to interact to small unilamellar liposomes. In Apis cerana (Indian honeybee), this protein is Melittin-N (MELT).